The following is a 568-amino-acid chain: Putative ABC transporter ATP-binding protein EF_2153 (568 aa).

2 consecutive ABC transporter domains span residues 6-247 (ITFN…GIRE) and 301-535 (LRLE…ASLK). Residues 40-47 (GPSGSGKS) and 335-342 (GKNGAGKS) contribute to the ATP site.

Belongs to the ABC transporter superfamily.

Its subcellular location is the cell membrane. Its function is as follows. Probably part of an ABC transporter complex. Responsible for energy coupling to the transport system. The polypeptide is Putative ABC transporter ATP-binding protein EF_2153 (Enterococcus faecalis (strain ATCC 700802 / V583)).